Consider the following 330-residue polypeptide: D-alanine--D-alanine ligase (330 aa).

Positions 120 to 326 constitute an ATP-grasp domain; the sequence is KLWYDALGIP…FKTFLQKAVL (207 aa). 150-205 contacts ATP; that stretch reads AFKQWGGLFVKAACQGSSVGCYKVTSEAELSKAINDAFGYSQQVLVEKAVKPRELE. Mg(2+) is bound by residues Asp-280, Glu-293, and Asn-295.

Belongs to the D-alanine--D-alanine ligase family. The cofactor is Mg(2+). Requires Mn(2+) as cofactor.

The protein localises to the cytoplasm. It catalyses the reaction 2 D-alanine + ATP = D-alanyl-D-alanine + ADP + phosphate + H(+). The protein operates within cell wall biogenesis; peptidoglycan biosynthesis. Its function is as follows. Cell wall formation. This Aliivibrio fischeri (strain ATCC 700601 / ES114) (Vibrio fischeri) protein is D-alanine--D-alanine ligase.